The primary structure comprises 325 residues: Leucine carboxyl methyltransferase 1 (325 aa).

Residues Arg79, Gly104, Asp127, 174 to 175 (DL), and Glu200 each bind S-adenosyl-L-methionine.

Belongs to the methyltransferase superfamily. LCMT family.

The enzyme catalyses [phosphatase 2A protein]-C-terminal L-leucine + S-adenosyl-L-methionine = [phosphatase 2A protein]-C-terminal L-leucine methyl ester + S-adenosyl-L-homocysteine. In terms of biological role, methylates the carboxyl group of the C-terminal leucine residue of protein phosphatase 2A catalytic subunits to form alpha-leucine ester residues. The sequence is that of Leucine carboxyl methyltransferase 1 (PPM1) from Eremothecium gossypii (strain ATCC 10895 / CBS 109.51 / FGSC 9923 / NRRL Y-1056) (Yeast).